The sequence spans 22 residues: Cysteine proteinase (22 aa).

The disordered stretch occupies residues 1–22; sequence GADDSDWRKKGAVNVIXKDQGQ.

It belongs to the peptidase C1 family.

This Trichomonas vaginalis protein is Cysteine proteinase.